Here is a 421-residue protein sequence, read N- to C-terminus: ATP-dependent RNA helicase eIF4A (421 aa).

A disordered region spans residues 1-26 (MSNDKGLEEIPEDQSTTPHKPTSNVG). Over residues 13–26 (DQSTTPHKPTSNVG) the composition is skewed to polar residues. The Q motif signature appears at 48–76 (DSFDAMELKPELLRGVYAYGFERPSAIQQ). A Helicase ATP-binding domain is found at 79–249 (IKPIIKGSDV…TKFMRDPVRI (171 aa)). ATP is bound at residue 92–99 (AQSGTGKT). A DEAD box motif is present at residues 197–200 (DEAD). The 162-residue stretch at 260–421 (GIKQFYIAVE…EMPMNVADLI (162 aa)) folds into the Helicase C-terminal domain.

The protein belongs to the DEAD box helicase family. eIF4A subfamily. Component of the eIF4F complex, which composition varies with external and internal environmental conditions. It is composed of at least eIF4A, eIF4E and eIF4G.

The protein resides in the cytoplasm. The enzyme catalyses ATP + H2O = ADP + phosphate + H(+). Functionally, ATP-dependent RNA helicase which is a subunit of the eIF4F complex involved in cap recognition and is required for mRNA binding to ribosome. In the current model of translation initiation, eIF4A unwinds RNA secondary structures in the 5'-UTR of mRNAs which is necessary to allow efficient binding of the small ribosomal subunit, and subsequent scanning for the initiator codon. This chain is ATP-dependent RNA helicase eIF4A (tif1), found in Aspergillus oryzae (strain ATCC 42149 / RIB 40) (Yellow koji mold).